The following is a 330-amino-acid chain: MLDFLAITLSGKPPQVIQGETVNLKWQWLGEGILTLVPHRSYTQSVVISAGIHGNETAPIEILNQLVTDLLAGQLPLSVRLLVLLGNPPAIRKGKRYLSNDINRMFGGRYQHYTPSDETRRASTLEQRVMAFFQASHTSERLHYDLHTAIRGSYHPRFGLLPYQQTPYSAAMFRWLRDIELDALVMHTSAGGTFAHFSSERCQAASCTLELGKALPFGENQLSQFSAITQGLRSLVSDSALPARKTENMKYYRVVKSLLRQHPDFKLRVAEDTVNFTRFAQGTLLTEQPNDNYRVEHPYEWILFPNPHVALGLRAGMMLVKMCESELPIT.

Zn(2+) is bound by residues histidine 53, glutamate 56, and histidine 147. Residue glutamate 210 is part of the active site.

Belongs to the AspA/AstE family. Succinylglutamate desuccinylase subfamily. It depends on Zn(2+) as a cofactor.

The enzyme catalyses N-succinyl-L-glutamate + H2O = L-glutamate + succinate. Its pathway is amino-acid degradation; L-arginine degradation via AST pathway; L-glutamate and succinate from L-arginine: step 5/5. In terms of biological role, transforms N(2)-succinylglutamate into succinate and glutamate. This chain is Succinylglutamate desuccinylase, found in Yersinia pseudotuberculosis serotype O:1b (strain IP 31758).